Here is a 360-residue protein sequence, read N- to C-terminus: DNA replication and repair protein RecF (360 aa).

30–37 contributes to the ATP binding site; sequence GQNGSGKT.

It belongs to the RecF family.

The protein resides in the cytoplasm. In terms of biological role, the RecF protein is involved in DNA metabolism; it is required for DNA replication and normal SOS inducibility. RecF binds preferentially to single-stranded, linear DNA. It also seems to bind ATP. The polypeptide is DNA replication and repair protein RecF (Shewanella putrefaciens (strain CN-32 / ATCC BAA-453)).